A 233-amino-acid polypeptide reads, in one-letter code: Large ribosomal subunit protein bL19c (233 aa).

The N-terminal 77 residues, 1–77 (MASKVLPQAL…FPARNSFVVR (77 aa)), are a transit peptide targeting the chloroplast.

In terms of assembly, component of the chloroplast large ribosomal subunit (LSU). Mature 70S chloroplast ribosomes of higher plants consist of a small (30S) and a large (50S) subunit. The 30S small subunit contains 1 molecule of ribosomal RNA (16S rRNA) and 24 different proteins. The 50S large subunit contains 3 rRNA molecules (23S, 5S and 4.5S rRNA) and 33 different proteins.

It is found in the plastid. The protein localises to the chloroplast. In terms of biological role, component of the chloroplast ribosome (chloro-ribosome), a dedicated translation machinery responsible for the synthesis of chloroplast genome-encoded proteins, including proteins of the transcription and translation machinery and components of the photosynthetic apparatus. This chain is Large ribosomal subunit protein bL19c (RPL19), found in Spinacia oleracea (Spinach).